A 117-amino-acid polypeptide reads, in one-letter code: MSGEVSYYAGQTAEEAVARIYDRSGRPVAARRWRGVSGEIDLIAREGAEVIFIEVKKSTSHAAAAARLSRRQMDRIYGAASEFLAGEPRGQLTASRFDVALVDALGRVEIIENAFAA.

It belongs to the UPF0102 family.

The chain is UPF0102 protein RHOS4_03930 from Cereibacter sphaeroides (strain ATCC 17023 / DSM 158 / JCM 6121 / CCUG 31486 / LMG 2827 / NBRC 12203 / NCIMB 8253 / ATH 2.4.1.) (Rhodobacter sphaeroides).